The chain runs to 701 residues: DNA-directed RNA polymerase subunit beta' (701 aa).

The Zn(2+) site is built by cysteine 76, cysteine 78, cysteine 94, and cysteine 97. Positions 511, 513, and 515 each coordinate Mg(2+).

This sequence belongs to the RNA polymerase beta' chain family. RpoC1 subfamily. In plastids the minimal PEP RNA polymerase catalytic core is composed of four subunits: alpha, beta, beta', and beta''. When a (nuclear-encoded) sigma factor is associated with the core the holoenzyme is formed, which can initiate transcription. Requires Mg(2+) as cofactor. Zn(2+) is required as a cofactor.

It localises to the plastid. It is found in the chloroplast. The catalysed reaction is RNA(n) + a ribonucleoside 5'-triphosphate = RNA(n+1) + diphosphate. Functionally, DNA-dependent RNA polymerase catalyzes the transcription of DNA into RNA using the four ribonucleoside triphosphates as substrates. This is DNA-directed RNA polymerase subunit beta' from Pelargonium hortorum (Common geranium).